The sequence spans 436 residues: Arginine-hydroxylase NDUFAF5, mitochondrial (436 aa).

A mitochondrion-targeting transit peptide spans 1–25; sequence MLRTTFRKGFNLKCFSKDWNQTRQY. Positions 365–436 are disordered; the sequence is VTLSQQQQQQ…DEINKNKDDK (72 aa). Low complexity predominate over residues 369-380; that stretch reads QQQQQQGIEPQQ. 2 stretches are compositionally biased toward basic and acidic residues: residues 391-411 and 421-436; these read PKTDDFVIKRLDYHGNFHFEK and QNKESSDEINKNKDDK.

This sequence belongs to the methyltransferase superfamily.

It localises to the mitochondrion. In terms of biological role, involved in the assembly of mitochondrial NADH:ubiquinone oxidoreductase complex (complex I, MT-ND1) at early stages. Probably acts as an arginine hydroxylase. May also have methyltransferase activity. The sequence is that of Arginine-hydroxylase NDUFAF5, mitochondrial from Dictyostelium discoideum (Social amoeba).